Consider the following 269-residue polypeptide: Glutamate racemase (269 aa).

Substrate contacts are provided by residues 11 to 12 (DS) and 43 to 44 (YG). Cysteine 74 serves as the catalytic Proton donor/acceptor. Residue 75-76 (NT) participates in substrate binding. Cysteine 185 acts as the Proton donor/acceptor in catalysis. 186–187 (TH) is a substrate binding site.

It belongs to the aspartate/glutamate racemases family.

It carries out the reaction L-glutamate = D-glutamate. The protein operates within cell wall biogenesis; peptidoglycan biosynthesis. In terms of biological role, provides the (R)-glutamate required for cell wall biosynthesis. This is Glutamate racemase from Bacillus cereus (strain G9842).